Consider the following 208-residue polypeptide: Methylthioribulose-1-phosphate dehydratase (208 aa).

Residues histidine 96 and histidine 98 each coordinate Zn(2+).

This sequence belongs to the aldolase class II family. MtnB subfamily. Requires Zn(2+) as cofactor.

The catalysed reaction is 5-(methylsulfanyl)-D-ribulose 1-phosphate = 5-methylsulfanyl-2,3-dioxopentyl phosphate + H2O. The protein operates within amino-acid biosynthesis; L-methionine biosynthesis via salvage pathway; L-methionine from S-methyl-5-thio-alpha-D-ribose 1-phosphate: step 2/6. Catalyzes the dehydration of methylthioribulose-1-phosphate (MTRu-1-P) into 2,3-diketo-5-methylthiopentyl-1-phosphate (DK-MTP-1-P). The chain is Methylthioribulose-1-phosphate dehydratase from Pseudomonas fluorescens (strain Pf0-1).